A 1115-amino-acid polypeptide reads, in one-letter code: Lateral signaling target protein 2 homolog (1115 aa).

Disordered stretches follow at residues 308–488 (PLGS…DSDS), 545–586 (SEDD…PSTS), 600–742 (RLPS…SLSD), and 879–1027 (VQSS…PDGK). The segment covering 322-361 (NNSSSTTNTSNNNNNNTNNNNSSSGSDCTNNDKTGTTTNT) has biased composition (low complexity). Positions 363–373 (KPVERLVDHRN) are enriched in basic and acidic residues. 2 stretches are compositionally biased toward low complexity: residues 374-417 (NNTT…TPTA) and 425-444 (PSHS…NSPA). Over residues 449–488 (YDDDDEDDDDDDVHADVEEDEDESGILDSDEHDLNDDSDS) the composition is skewed to acidic residues. Composition is skewed to low complexity over residues 558-577 (QQQQ…QQQQ) and 600-614 (RLPS…SSNN). Phosphoserine occurs at positions 603 and 604. Residues 615-628 (QQMTIKSPSEQTTT) are compositionally biased toward polar residues. Basic residues predominate over residues 632–655 (SNRHRHHSHHHHHHHHSHHHHHHQ). Residues 658-676 (AAVAVAAAQDEQHNNNQPH) are compositionally biased toward low complexity. Over residues 677–706 (SHSHSSSHHHHHNHQSHSHPHRANRSTRKR) the composition is skewed to basic residues. 3 stretches are compositionally biased toward low complexity: residues 714 to 726 (TITT…GGEQ), 733 to 742 (DSSTASSLSD), and 881 to 901 (SSNS…AARS). Phosphoserine is present on serine 908. Low complexity-rich tracts occupy residues 921–975 (QQQQ…SPVS) and 988–1020 (TTTT…MSPP). The FYVE-type zinc finger occupies 1025–1085 (DGKAPRCMSC…VCRECFMREV (61 aa)). Cysteine 1031, cysteine 1034, cysteine 1047, cysteine 1050, cysteine 1055, cysteine 1058, cysteine 1077, and cysteine 1080 together coordinate Zn(2+). The disordered stretch occupies residues 1088–1115 (SHSHGQSQSQIHSPTQQAGGRPQAASAS). Residues 1090-1100 (SHGQSQSQIHS) are compositionally biased toward low complexity.

Belongs to the lst-2 family.

Functionally, negative regulator of epidermal growth factor receptor (EGFR) signaling. The sequence is that of Lateral signaling target protein 2 homolog from Drosophila grimshawi (Hawaiian fruit fly).